Reading from the N-terminus, the 107-residue chain is Replication protein A 14 kDa subunit A (107 aa).

At M1 the chain carries N-acetylmethionine.

The protein belongs to the replication factor A protein 3 family. In terms of assembly, component of the heterotrimeric canonical replication protein A complex (RPA).

It is found in the nucleus. As part of the replication protein A (RPA/RP-A), a single-stranded DNA-binding heterotrimeric complex, may play an essential role in DNA replication, recombination and repair. Binds and stabilizes single-stranded DNA intermediates, preventing complementary DNA reannealing and recruiting different proteins involved in DNA metabolism. The sequence is that of Replication protein A 14 kDa subunit A (RPA3A) from Arabidopsis thaliana (Mouse-ear cress).